We begin with the raw amino-acid sequence, 350 residues long: Protein-glutamate methylesterase/protein-glutamine glutaminase 1 (350 aa).

The region spanning 6-123 (RVLVVDDSAL…GRSVENYAEE (118 aa)) is the Response regulatory domain. 4-aspartylphosphate is present on aspartate 57. The CheB-type methylesterase domain maps to 159 to 350 (LGASGKIIFV…ARRVLGAVSA (192 aa)). Residues serine 171, histidine 197, and aspartate 293 contribute to the active site.

This sequence belongs to the CheB family. In terms of processing, phosphorylated by CheA. Phosphorylation of the N-terminal regulatory domain activates the methylesterase activity.

The protein localises to the cytoplasm. It carries out the reaction [protein]-L-glutamate 5-O-methyl ester + H2O = L-glutamyl-[protein] + methanol + H(+). The enzyme catalyses L-glutaminyl-[protein] + H2O = L-glutamyl-[protein] + NH4(+). Involved in chemotaxis. Part of a chemotaxis signal transduction system that modulates chemotaxis in response to various stimuli. Catalyzes the demethylation of specific methylglutamate residues introduced into the chemoreceptors (methyl-accepting chemotaxis proteins or MCP) by CheR. Also mediates the irreversible deamidation of specific glutamine residues to glutamic acid. The polypeptide is Protein-glutamate methylesterase/protein-glutamine glutaminase 1 (Dechloromonas aromatica (strain RCB)).